Here is a 148-residue protein sequence, read N- to C-terminus: Hemoglobin subunit beta (148 aa).

A Globin domain is found at 3–148; that stretch reads XWTDXERHVI…AVAALGKQYH (146 aa). Heme b is bound by residues His-64 and His-93.

It belongs to the globin family. As to quaternary structure, heterotetramer of two alpha chains and two beta chains. Red blood cells.

In terms of biological role, involved in oxygen transport from gills to the various peripheral tissues. The sequence is that of Hemoglobin subunit beta (hbb) from Silurus asotus (Amur catfish).